We begin with the raw amino-acid sequence, 297 residues long: Thiosulfate sulfurtransferase (297 aa).

Lys-14 carries the N6-acetyllysine; alternate modification. Lys-14 bears the N6-succinyllysine; alternate mark. The Rhodanese 1 domain occupies 25–143 (LGPSLRVLDA…WLKEGHPVTS (119 aa)). Ser-35 carries an O-linked (GlcNAc) serine glycan. Ser-38 is modified (phosphoserine). Lys-136 is modified (N6-acetyllysine; alternate). Lys-136 is subject to N6-succinyllysine; alternate. Residues 144-159 (EPSRPEPAVFKATLNL) are hinge. The residue at position 163 (Lys-163) is an N6-acetyllysine. One can recognise a Rhodanese 2 domain in the interval 173 to 288 (QSKRFQLVDS…WFRRAPPETR (116 aa)). Position 175 is an N6-acetyllysine; alternate (Lys-175). Position 175 is an N6-succinyllysine; alternate (Lys-175). Arg-187 contacts substrate. N6-acetyllysine; alternate occurs at positions 219 and 224. N6-succinyllysine; alternate is present on residues Lys-219 and Lys-224. Lys-236 carries the N6-acetyllysine modification. Lys-237 is subject to N6-acetyllysine; alternate. Lys-237 is modified (N6-succinyllysine; alternate). Cys-248 (cysteine persulfide intermediate) is an active-site residue. Substrate is bound at residue Lys-250.

In terms of assembly, monomer. Expressed in numerous tissues.

The protein resides in the mitochondrion matrix. The catalysed reaction is thiosulfate + hydrogen cyanide = thiocyanate + sulfite + 2 H(+). Together with MRPL18, acts as a mitochondrial import factor for the cytosolic 5S rRNA. Only the nascent unfolded cytoplasmic form is able to bind to the 5S rRNA. Formation of iron-sulfur complexes and cyanide detoxification. The chain is Thiosulfate sulfurtransferase (Tst) from Mus musculus (Mouse).